Reading from the N-terminus, the 287-residue chain is MNTVKTVRELRAAVARARGEGKRIGFVPTMGNLHSGHAALVTKAAQRADFVVASIFVNPLQFGANEDLDKYPRTLAADQERLVQAGCNLLFAPTVEEMYPDGMSVQTRVSVPQLSEGLCGASRPGHFEGVATVVNKLFNMVQPDLAVFGEKDYQQLAVIRAMVRDLNMPIQIIGEPTVRAEDGLALSSRNGYLTPEQRTAAPALYRTLQHIAAGIGRGQRDFAALVAEGQAQLSAAGFRPDYLEVRHAVSLRPAVINDRDLVVIAAAYLGNTRLIDNLYLHLEEKTA.

ATP is bound at residue 30–37; it reads MGNLHSGH. Catalysis depends on H37, which acts as the Proton donor. (R)-pantoate is bound at residue Q61. Q61 is a binding site for beta-alanine. 149–152 lines the ATP pocket; it reads GEKD. Q155 contributes to the (R)-pantoate binding site. ATP is bound by residues V178 and 186–189; that span reads LSSR.

This sequence belongs to the pantothenate synthetase family. As to quaternary structure, homodimer.

It is found in the cytoplasm. It carries out the reaction (R)-pantoate + beta-alanine + ATP = (R)-pantothenate + AMP + diphosphate + H(+). The protein operates within cofactor biosynthesis; (R)-pantothenate biosynthesis; (R)-pantothenate from (R)-pantoate and beta-alanine: step 1/1. In terms of biological role, catalyzes the condensation of pantoate with beta-alanine in an ATP-dependent reaction via a pantoyl-adenylate intermediate. The polypeptide is Pantothenate synthetase (Pseudomonas putida (strain ATCC 47054 / DSM 6125 / CFBP 8728 / NCIMB 11950 / KT2440)).